Consider the following 512-residue polypeptide: NADH-quinone oxidoreductase subunit N 2 (512 aa).

14 helical membrane-spanning segments follow: residues 23–43, 50–70, 88–108, 120–140, 144–164, 179–199, 220–240, 254–274, 295–315, 323–343, 351–371, 394–414, 429–449, and 477–497; these read AFVP…IDLF, TIIP…VYLQ, FAIF…LISI, SLGE…LMAS, LLMM…LVGY, VIYG…IYGL, ITLM…AGVV, PTPI…AMLI, WVTL…VVAL, LLAY…IVAD, LFYL…IILI, AASL…VGFI, VFVW…YFYF, and LVAF…PLSV.

This sequence belongs to the complex I subunit 2 family. NDH-1 is composed of 14 different subunits. Subunits NuoA, H, J, K, L, M, N constitute the membrane sector of the complex.

The protein localises to the cell inner membrane. It catalyses the reaction a quinone + NADH + 5 H(+)(in) = a quinol + NAD(+) + 4 H(+)(out). Its function is as follows. NDH-1 shuttles electrons from NADH, via FMN and iron-sulfur (Fe-S) centers, to quinones in the respiratory chain. The immediate electron acceptor for the enzyme in this species is believed to be a menaquinone. Couples the redox reaction to proton translocation (for every two electrons transferred, four hydrogen ions are translocated across the cytoplasmic membrane), and thus conserves the redox energy in a proton gradient. In Chloroherpeton thalassium (strain ATCC 35110 / GB-78), this protein is NADH-quinone oxidoreductase subunit N 2.